The sequence spans 493 residues: Glutamate--tRNA ligase (493 aa).

Positions 9-19 (PSPTGDPHVGT) match the 'HIGH' region motif. The short motif at 249 to 253 (KLSKR) is the 'KMSKS' region element. ATP is bound at residue Lys-252.

Belongs to the class-I aminoacyl-tRNA synthetase family. Glutamate--tRNA ligase type 1 subfamily. Monomer.

Its subcellular location is the cytoplasm. The enzyme catalyses tRNA(Glu) + L-glutamate + ATP = L-glutamyl-tRNA(Glu) + AMP + diphosphate. Catalyzes the attachment of glutamate to tRNA(Glu) in a two-step reaction: glutamate is first activated by ATP to form Glu-AMP and then transferred to the acceptor end of tRNA(Glu). The sequence is that of Glutamate--tRNA ligase from Marinobacter nauticus (strain ATCC 700491 / DSM 11845 / VT8) (Marinobacter aquaeolei).